Consider the following 205-residue polypeptide: Protein TON_1965 (205 aa).

One can recognise an AMMECR1 domain in the interval 7 to 201; it reads EWGEFLVRLA…EEYPKGPVKR (195 aa).

This chain is Protein TON_1965, found in Thermococcus onnurineus (strain NA1).